Consider the following 557-residue polypeptide: Urocanate hydratase (557 aa).

Positions 1 to 20 (MSNPRHNEREVRSPRGDELN) are disordered. NAD(+)-binding positions include 52-53 (GG), glutamine 130, 176-178 (GMG), glutamate 196, arginine 201, 242-243 (NA), 263-267 (QTSAH), 273-274 (YL), and tyrosine 322. Residue cysteine 410 is part of the active site. Glycine 492 lines the NAD(+) pocket.

Belongs to the urocanase family. The cofactor is NAD(+).

The protein resides in the cytoplasm. The enzyme catalyses 4-imidazolone-5-propanoate = trans-urocanate + H2O. It functions in the pathway amino-acid degradation; L-histidine degradation into L-glutamate; N-formimidoyl-L-glutamate from L-histidine: step 2/3. Its function is as follows. Catalyzes the conversion of urocanate to 4-imidazolone-5-propionate. The protein is Urocanate hydratase of Brucella canis (strain ATCC 23365 / NCTC 10854 / RM-666).